Here is a 175-residue protein sequence, read N- to C-terminus: ATP synthase subunit b, chloroplastic (175 aa).

Residues 24-46 (VLNLAVVLAIVLTYVGDALRGLL) form a helical membrane-spanning segment.

The protein belongs to the ATPase B chain family. In terms of assembly, F-type ATPases have 2 components, F(1) - the catalytic core - and F(0) - the membrane proton channel. F(1) has five subunits: alpha(3), beta(3), gamma(1), delta(1), epsilon(1). F(0) has four main subunits: a(1), b(1), b'(1) and c(10-14). The alpha and beta chains form an alternating ring which encloses part of the gamma chain. F(1) is attached to F(0) by a central stalk formed by the gamma and epsilon chains, while a peripheral stalk is formed by the delta, b and b' chains.

It localises to the plastid. The protein localises to the chloroplast thylakoid membrane. F(1)F(0) ATP synthase produces ATP from ADP in the presence of a proton or sodium gradient. F-type ATPases consist of two structural domains, F(1) containing the extramembraneous catalytic core and F(0) containing the membrane proton channel, linked together by a central stalk and a peripheral stalk. During catalysis, ATP synthesis in the catalytic domain of F(1) is coupled via a rotary mechanism of the central stalk subunits to proton translocation. In terms of biological role, component of the F(0) channel, it forms part of the peripheral stalk, linking F(1) to F(0). This chain is ATP synthase subunit b, chloroplastic, found in Chlorella vulgaris (Green alga).